The sequence spans 127 residues: Fluoride-specific ion channel FluC (127 aa).

Helical transmembrane passes span 37-57, 68-88, and 102-122; these read TSFV…WLAL, LFLA…SLEV, and LYAG…LWMA. Gly76 and Thr79 together coordinate Na(+).

This sequence belongs to the fluoride channel Fluc/FEX (TC 1.A.43) family.

Its subcellular location is the cell inner membrane. It carries out the reaction fluoride(in) = fluoride(out). With respect to regulation, na(+) is not transported, but it plays an essential structural role and its presence is essential for fluoride channel function. Its function is as follows. Fluoride-specific ion channel. Important for reducing fluoride concentration in the cell, thus reducing its toxicity. This Hyphomonas neptunium (strain ATCC 15444) protein is Fluoride-specific ion channel FluC.